Consider the following 669-residue polypeptide: Zinc finger MYM-type protein 5 (669 aa).

Residues Lys88, Lys91, Lys134, Lys149, Lys166, and Lys225 each participate in a glycyl lysine isopeptide (Lys-Gly) (interchain with G-Cter in SUMO2) cross-link. 4 MYM-type zinc fingers span residues 265 to 299 (HLFCSTTCLSSFSHKRTQNTRSIICKKDASTKKAN), 311 to 351 (QEFY…RHEV), 358 to 393 (HKLCSNHCFNKYRLANGLIMNCCEHCGEYMPSKSTG), and 404 to 431 (KRFCCQSCINEYKQMMETKSKKLTASEN). Residues Lys443, Lys455, Lys462, and Lys552 each participate in a glycyl lysine isopeptide (Lys-Gly) (interchain with G-Cter in SUMO2) cross-link.

As to quaternary structure, interacts (via N-terminal 120 amino acid region) with ETV5 (via C-terminal).

The protein localises to the nucleus. Its function is as follows. Functions as a transcriptional regulator. The polypeptide is Zinc finger MYM-type protein 5 (ZMYM5) (Homo sapiens (Human)).